A 203-amino-acid chain; its full sequence is Urease accessory protein UreG (203 aa).

11–18 contacts GTP; the sequence is GPVGSGKT.

The protein belongs to the SIMIBI class G3E GTPase family. UreG subfamily. In terms of assembly, homodimer. UreD, UreF and UreG form a complex that acts as a GTP-hydrolysis-dependent molecular chaperone, activating the urease apoprotein by helping to assemble the nickel containing metallocenter of UreC. The UreE protein probably delivers the nickel.

The protein resides in the cytoplasm. In terms of biological role, facilitates the functional incorporation of the urease nickel metallocenter. This process requires GTP hydrolysis, probably effectuated by UreG. The chain is Urease accessory protein UreG from Prochlorococcus marinus (strain MIT 9215).